We begin with the raw amino-acid sequence, 678 residues long: DNA ligase (678 aa).

NAD(+)-binding positions include 47-51 (DSDYD), 96-97 (SL), and E122. The active-site N6-AMP-lysine intermediate is K124. NAD(+)-binding residues include R145, E182, K300, and K324. C418, C421, C436, and C442 together coordinate Zn(2+). A BRCT domain is found at 602 to 678 (AYNESFTGKT…ILEDNLKDLL (77 aa)).

Belongs to the NAD-dependent DNA ligase family. LigA subfamily. It depends on Mg(2+) as a cofactor. Mn(2+) is required as a cofactor.

The enzyme catalyses NAD(+) + (deoxyribonucleotide)n-3'-hydroxyl + 5'-phospho-(deoxyribonucleotide)m = (deoxyribonucleotide)n+m + AMP + beta-nicotinamide D-nucleotide.. In terms of biological role, DNA ligase that catalyzes the formation of phosphodiester linkages between 5'-phosphoryl and 3'-hydroxyl groups in double-stranded DNA using NAD as a coenzyme and as the energy source for the reaction. It is essential for DNA replication and repair of damaged DNA. The protein is DNA ligase of Francisella tularensis subsp. holarctica (strain OSU18).